The primary structure comprises 537 residues: O-phosphoserine--tRNA(Cys) ligase (537 aa).

Residues 186 to 188, 231 to 233, 273 to 274, and asparagine 317 contribute to the substrate site; these read HMT, SAS, and YY.

This sequence belongs to the class-II aminoacyl-tRNA synthetase family. O-phosphoseryl-tRNA(Cys) synthetase subfamily. Homotetramer. Interacts with SepCysS.

The enzyme catalyses tRNA(Cys) + O-phospho-L-serine + ATP = O-phospho-L-seryl-tRNA(Cys) + AMP + diphosphate. In terms of biological role, catalyzes the attachment of O-phosphoserine (Sep) to tRNA(Cys). The protein is O-phosphoserine--tRNA(Cys) ligase of Methanococcus maripaludis (strain DSM 14266 / JCM 13030 / NBRC 101832 / S2 / LL).